The sequence spans 534 residues: MGLRVNVSAIFMAVLLTLQTPTGQIHWGNLSKIGVVGIGSASYKVMTRSSHQSLVIKLMPNTTLLNNCTRVEIAEYRRLLRTVLEPIRDALNAMTQNIRPVQIVASSRRHKRFAGVVLAGAALGVATAAQITAGIALHQSMLNSQAIDNLRASLETTNQAIEAIRQTGQEMILAVQGVQDYINNELIPSMNQLSCDLIGQKLGLKLLRYYTEILSLFGPSLRDPISAEISIQALSYVLGGDINKVLEKLGYSGGDLLGILESRGIKARITHVDTESYFIVLSIAYPTLSEIKGVIVHRLEGVSYNIGSQEWYTTVPKYVATQGYLISNFDESSCTFMPEGTVCSQNALYPMSPLLQECLRGSTKSCARTLVSGSFGNRFILSQGNLIANCASILCKCYTTGTIINQDPDKILTHIAADHCPVVEVNGVTIQVGSRRYPDAVYLHRIDLGPPISLERLDVGTSLGSAIAKLEDAKELLESSDQILRSMKGLSSTSIVYILIAVCLGGLIGIPALICCCRGRCNKRENKLVCQDQA.

The first 23 residues, 1–23 (MGLRVNVSAIFMAVLLTLQTPTG), serve as a signal peptide directing secretion. The Extracellular segment spans residues 24-487 (QIHWGNLSKI…ESSDQILRSM (464 aa)). Asn29, Asn61, and Asn67 each carry an N-linked (GlcNAc...) asparagine; by host glycan. The tract at residues 69-95 (TRVEIAEYRRLLRTVLEPIRDALNAMT) is HRC. A fusion peptide region spans residues 113–138 (FAGVVLAGAALGVATAAQITAGIALH). Residues 138–166 (HQSMLNSQAIDNLRASLETTNQAIEAIRQ) are a coiled coil. The segment at 139–215 (QSMLNSQAID…LLRYYTEILS (77 aa)) is HRA. Cystine bridges form between Cys334/Cys343, Cys358/Cys366, Cys390/Cys395, and Cys397/Cys420. The segment at 367–444 (ARTLVSGSFG…RRYPDAVYLH (78 aa)) is interaction with hemagglutinin. Residues 445-494 (RIDLGPPISLERLDVGTSLGSAIAKLEDAKELLESSDQILRSMKGLSSTS) form an HRB region. Residues 462–487 (SLGSAIAKLEDAKELLESSDQILRSM) are a coiled coil. Residues 488–518 (KGLSSTSIVYILIAVCLGGLIGIPALICCCR) form a helical membrane-spanning segment. The Cytoplasmic portion of the chain corresponds to 519–534 (GRCNKRENKLVCQDQA).

It belongs to the paramyxoviruses fusion glycoprotein family. Homotrimer of disulfide-linked F1-F2. The inactive precursor F0 is glycosylated and proteolytically cleaved into F1 and F2 to be functionally active. The cleavage is mediated by host furin during the transport and maturation of the polypeptide.

The protein resides in the virion membrane. It is found in the host cell membrane. Class I viral fusion protein. Under the current model, the protein has at least 3 conformational states: pre-fusion native state, pre-hairpin intermediate state, and post-fusion hairpin state. During viral and plasma cell membrane fusion, the heptad repeat (HR) regions assume a trimer-of-hairpins structure, positioning the fusion peptide in close proximity to the C-terminal region of the ectodomain. The formation of this structure appears to drive apposition and subsequent fusion of viral and plasma cell membranes. Directs fusion of viral and cellular membranes leading to delivery of the nucleocapsid into the cytoplasm. This fusion is pH independent and occurs directly at the outer cell membrane. During viral entry or virus-mediated fusion between infected cells and neighboring susceptible cells, the head domain of the H protein initially binds to its receptor and then the stalk region of the H protein transmits the fusion-triggering signal to the F protein. Upon HN binding to its cellular receptor, the hydrophobic fusion peptide is unmasked and interacts with the cellular membrane, inducing the fusion between cell and virion membranes. Later in infection, F proteins expressed at the plasma membrane of infected cells could mediate fusion with adjacent cells to form syncytia, a cytopathic effect that could lead to tissue necrosis. In terms of biological role, some hyperfusogenic isolates can induce membrane fusion in SLAM- and nectin-4-negative cells and are linked to fatal subacute sclerosing panencephalitis (SSPE) or measles inclusion body encephalitis (MIBE). The neuropathogenicity is closely associated with enhanced propagation mediated by cell-to-cell fusion in the brain, which is principally regulated by hyperfusogenic mutations of the viral F protein. Cell-to-cell transmission of the virus also occurs with hyperfusogenic isolates. In Measles virus (strain Yamagata-1) (MeV), this protein is Fusion glycoprotein F0 (F).